The following is a 306-amino-acid chain: Elongation factor Ts (306 aa).

An involved in Mg(2+) ion dislocation from EF-Tu region spans residues 80–83; sequence TDFV.

Belongs to the EF-Ts family.

It is found in the cytoplasm. In terms of biological role, associates with the EF-Tu.GDP complex and induces the exchange of GDP to GTP. It remains bound to the aminoacyl-tRNA.EF-Tu.GTP complex up to the GTP hydrolysis stage on the ribosome. This is Elongation factor Ts from Clostridium acetobutylicum (strain ATCC 824 / DSM 792 / JCM 1419 / IAM 19013 / LMG 5710 / NBRC 13948 / NRRL B-527 / VKM B-1787 / 2291 / W).